Reading from the N-terminus, the 579-residue chain is 2-succinyl-5-enolpyruvyl-6-hydroxy-3-cyclohexene-1-carboxylate synthase (579 aa).

Belongs to the TPP enzyme family. MenD subfamily. In terms of assembly, homodimer. Mg(2+) serves as cofactor. It depends on Mn(2+) as a cofactor. Thiamine diphosphate is required as a cofactor.

It carries out the reaction isochorismate + 2-oxoglutarate + H(+) = 5-enolpyruvoyl-6-hydroxy-2-succinyl-cyclohex-3-ene-1-carboxylate + CO2. It participates in quinol/quinone metabolism; 1,4-dihydroxy-2-naphthoate biosynthesis; 1,4-dihydroxy-2-naphthoate from chorismate: step 2/7. Its pathway is quinol/quinone metabolism; menaquinone biosynthesis. Catalyzes the thiamine diphosphate-dependent decarboxylation of 2-oxoglutarate and the subsequent addition of the resulting succinic semialdehyde-thiamine pyrophosphate anion to isochorismate to yield 2-succinyl-5-enolpyruvyl-6-hydroxy-3-cyclohexene-1-carboxylate (SEPHCHC). The protein is 2-succinyl-5-enolpyruvyl-6-hydroxy-3-cyclohexene-1-carboxylate synthase of Oceanobacillus iheyensis (strain DSM 14371 / CIP 107618 / JCM 11309 / KCTC 3954 / HTE831).